A 490-amino-acid chain; its full sequence is NADP-reducing hydrogenase subunit HndC (490 aa).

2 consecutive 4Fe-4S ferredoxin-type domains span residues 433 to 462 and 463 to 490; these read LTYT…GTKK and QPHT…IIKQ.

This sequence belongs to the complex I 51 kDa subunit family. Heterotetramer composed of HndA, HndB, HndC and HndD subunits. HndC is probably the reducing subunit.

It catalyses the reaction H2 + NADP(+) = NADPH + H(+). Inhibited by oxygen. In terms of biological role, catalyzes the reduction of NADP in the presence of molecular H2 to yield NADPH. The chain is NADP-reducing hydrogenase subunit HndC (hndC) from Solidesulfovibrio fructosivorans (Desulfovibrio fructosivorans).